A 571-amino-acid chain; its full sequence is MVGEYVRLTPAGKGRLKGLCPFHKEKTPSFQVDTEKGYYHCFGCKASGDVFGFVQQMEHLSFGDALRKLADRAGIQIDAKYGEKVSRDLYEVNAFALDYFRSHLPGPALDYLRGRGLSDETIAAFELGYAPDGWDGLLKLARTKGVSEKQLLEAGLLTENPENGRVYDRFRGRVMFPIRDHLGRLVGFGGRVLDDSKPKYLNTPETAAFKKGELLYGLDKARSGLGGGAELVVVEGYMDVISMHQHGFTGAVASLGTALTAEHAQLLERLGAQSIVLMFDQDGAGLKATLAGLDQVIGAKFRVRATSVPSGKDPADALLAGDDAGIREALAGGLDEVKYRVQAATEKYGVDTNEGKRRVLMELLPRMQNLDPLDAIAQDMRGAACELLGIRPEALLDWITSKAKRRTLTDTHLAGMSQSSGEEEHELALLRQLLVDPSLLAKLDGSLPWRNEAVRKVMLAAQGARSPDDILDIFRGQPEEQLLIRLMFEGRDSGSLSRASSQEYEQKVTTYAAHAVDDIQVTLNIDALKTEVDLLKKQLLSTPPAEQLALLSQIQELQRAIEAEKRARRGS.

Residues 20–44 (CPFHKEKTPSFQVDTEKGYYHCFGC) form a CHC2-type zinc finger. Residues 229-309 (AELVVVEGYM…KFRVRATSVP (81 aa)) enclose the Toprim domain. Residues Glu-235, Asp-280, and Asp-282 each contribute to the Mg(2+) site.

Belongs to the DnaG primase family. In terms of assembly, monomer. Interacts with DnaB. The cofactor is Zn(2+). Requires Mg(2+) as cofactor.

It carries out the reaction ssDNA + n NTP = ssDNA/pppN(pN)n-1 hybrid + (n-1) diphosphate.. Functionally, RNA polymerase that catalyzes the synthesis of short RNA molecules used as primers for DNA polymerase during DNA replication. This chain is DNA primase, found in Deinococcus radiodurans (strain ATCC 13939 / DSM 20539 / JCM 16871 / CCUG 27074 / LMG 4051 / NBRC 15346 / NCIMB 9279 / VKM B-1422 / R1).